The primary structure comprises 87 residues: LYR motif-containing protein 2 (87 aa).

The transit peptide at 1 to 19 (MGSRLPPAALTLKQFLVRQ) directs the protein to the mitochondrion.

The protein belongs to the complex I LYR family.

Its subcellular location is the mitochondrion. Involved in efficient integration of the N-module into mitochondrial respiratory chain complex I. The protein is LYR motif-containing protein 2 (lyrm2) of Xenopus laevis (African clawed frog).